The sequence spans 593 residues: Multidrug resistance-like ATP-binding protein MdlB (593 aa).

Residues 1–25 (MRSFSQLWPTLKRLLAYGSPWRKPL) lie on the Cytoplasmic side of the membrane. One can recognise an ABC transmembrane type-1 domain in the interval 25–310 (LGIAVLMMWV…LTTQQAMLQQ (286 aa)). Residues 26-46 (GIAVLMMWVAAAAEVSGPLLI) form a helical membrane-spanning segment. The Periplasmic portion of the chain corresponds to 47–62 (SYFIDNMVAKNNLPLK). Residues 63–83 (VVAGLAAAYVGLQLFAAGLHY) form a helical membrane-spanning segment. The Cytoplasmic portion of the chain corresponds to 84–140 (AQSLLFNRAAVGVVQQLRTDVMDAALRQPLSEFDTQPVGQVISRVTNDTEVIRDLYV). Residues 141–161 (TVVATVLRSAALVGAMLVAMF) traverse the membrane as a helical segment. The Periplasmic segment spans residues 162–164 (SLD). A helical transmembrane segment spans residues 165–185 (WRMALVAIMIFPVVLVVMVIY). The Cytoplasmic portion of the chain corresponds to 186–254 (QRYSTPIVRR…LRLDGFLLRP (69 aa)). Residues 255 to 275 (LLSLFSSLILCGLLMLFGFSA) traverse the membrane as a helical segment. The Periplasmic segment spans residues 276–278 (SGT). Residues 279 to 299 (IEVGVLYAFISYLGRLNEPLI) traverse the membrane as a helical segment. Over 300-593 (ELTTQQAMLQ…SVREEESLSA (294 aa)) the chain is Cytoplasmic. Residues 341 to 574 (IEVDNVSFAY…QGRYWQMYQL (234 aa)) form the ABC transporter domain. 374-381 (GHTGSGKS) is a binding site for ATP.

This sequence belongs to the ABC transporter superfamily. Drug exporter-2 (TC 3.A.1.117) family.

The protein resides in the cell inner membrane. The catalysed reaction is ATP + H2O + xenobioticSide 1 = ADP + phosphate + xenobioticSide 2.. The protein is Multidrug resistance-like ATP-binding protein MdlB (mdlB) of Escherichia coli O6:H1 (strain CFT073 / ATCC 700928 / UPEC).